Here is a 313-residue protein sequence, read N- to C-terminus: Sorting nexin-20 (313 aa).

Residues 1 to 61 (MASPQHPGGP…MTTRELQEHW (61 aa)) are disordered. Phosphoserine is present on serine 3. Positions 29–38 (PPGPDLPCPG) are enriched in pro residues. A compositionally biased stretch (polar residues) spans 45–55 (GPTSNSNMTTR). Residues 71-188 (VRLLFEIASA…DFLTRPELCE (118 aa)) form the PX domain. Positions 113, 115, 140, and 154 each coordinate a 1,2-diacyl-sn-glycero-3-phospho-(1D-myo-inositol-3-phosphate).

This sequence belongs to the sorting nexin family. In terms of assembly, interacts with SELPLG. Interaction with SELPLG is controversial.

Its subcellular location is the early endosome membrane. The protein localises to the cell membrane. It localises to the cytoplasm. It is found in the nucleus. In terms of biological role, may play a role in cellular vesicle trafficking. Has been proposed to function as a sorting protein that targets SELPLG into endosomes, but has no effect on SELPLG internalization from the cell surface, or on SELPLG-mediated cell-cell adhesion. The sequence is that of Sorting nexin-20 (Snx20) from Rattus norvegicus (Rat).